Reading from the N-terminus, the 136-residue chain is HTH-type transcriptional regulator CysB (136 aa).

The region spanning 1 to 59 (MDVRQLRSLVTLVEVRFSVSRAAECLHLVQSAVTQHLKQLEAELGTRLFVRHGKRLVGL) is the HTH lysR-type domain. The segment at residues 19–38 (VSRAAECLHLVQSAVTQHLK) is a DNA-binding region (H-T-H motif).

It belongs to the LysR transcriptional regulatory family.

Functionally, this protein is a positive regulator of gene expression for the cysteine regulon. In Thiocapsa roseopersicina, this protein is HTH-type transcriptional regulator CysB (cysB).